We begin with the raw amino-acid sequence, 622 residues long: Ferredoxin-fold anticodon-binding domain-containing protein 1 homolog (622 aa).

The FDX-ACB domain maps to Leu-529–Arg-622.

This is Ferredoxin-fold anticodon-binding domain-containing protein 1 homolog (Fdxacb1) from Mus musculus (Mouse).